A 435-amino-acid chain; its full sequence is Enolase (435 aa).

(2R)-2-phosphoglycerate is bound at residue glutamine 163. The Proton donor role is filled by glutamate 205. Positions 243, 292, and 319 each coordinate Mg(2+). 4 residues coordinate (2R)-2-phosphoglycerate: lysine 344, arginine 373, serine 374, and lysine 395. The Proton acceptor role is filled by lysine 344.

It belongs to the enolase family. As to quaternary structure, homooctamer, a tetramer of homodimers. Mg(2+) is required as a cofactor.

The protein resides in the cytoplasm. The protein localises to the secreted. It localises to the cell surface. Its subcellular location is the cell wall. It catalyses the reaction (2R)-2-phosphoglycerate = phosphoenolpyruvate + H2O. It participates in carbohydrate degradation; glycolysis; pyruvate from D-glyceraldehyde 3-phosphate: step 4/5. Functionally, catalyzes the reversible conversion of 2-phosphoglycerate (2-PG) into phosphoenolpyruvate (PEP). It is essential for the degradation of carbohydrates via glycolysis. 'Moonlights' as a plasminogen receptor. Binds plasminogen and more weakly plasmin when expressed on the bacterial cell surface; probably has more than one plasmin(ogen) binding site, may bind via Lys residues. Plasminogen binding potentially allows the bacterium to acquire surface-associated proteolytic activity, which in turn contributes to tissue invasion and virulence. The chain is Enolase from Streptococcus pyogenes serotype M6 (strain ATCC BAA-946 / MGAS10394).